The sequence spans 245 residues: Lactate utilization protein A 1 (245 aa).

This sequence belongs to the LutA/YkgE family.

Its function is as follows. Is involved in L-lactate degradation and allows cells to grow with lactate as the sole carbon source. This chain is Lactate utilization protein A 1, found in Bacillus mycoides (strain KBAB4) (Bacillus weihenstephanensis).